Here is a 230-residue protein sequence, read N- to C-terminus: ATP synthase subunit a 1 (230 aa).

Helical transmembrane passes span 20–40, 78–98, 112–132, 174–194, and 195–215; these read ATIVFSWLVMLILVLGSWLIT, FLPFIGTLFLFITMANLLTIF, AALALCVFVAVPIYGIKNVGI, LLVAILISIVPLFFPAVMTLF, and GLLVGVIQAYVFTILAMVYIA.

This sequence belongs to the ATPase A chain family. As to quaternary structure, F-type ATPases have 2 components, CF(1) - the catalytic core - and CF(0) - the membrane proton channel. CF(1) has five subunits: alpha(3), beta(3), gamma(1), delta(1), epsilon(1). CF(0) has four main subunits: a, b, b' and c.

It localises to the cellular thylakoid membrane. Functionally, key component of the proton channel; it plays a direct role in the translocation of protons across the membrane. The chain is ATP synthase subunit a 1 from Crocosphaera subtropica (strain ATCC 51142 / BH68) (Cyanothece sp. (strain ATCC 51142)).